A 399-amino-acid chain; its full sequence is Formate-dependent phosphoribosylglycinamide formyltransferase (399 aa).

Residues 22-23 and glutamate 82 contribute to the N(1)-(5-phospho-beta-D-ribosyl)glycinamide site; that span reads EL. Residues arginine 114, lysine 155, 160 to 165, 195 to 198, and glutamate 203 each bind ATP; these read SSGKGQ and EKMI. The ATP-grasp domain occupies 119 to 308; sequence RLAAETLHLL…EFALHVRAFL (190 aa). Positions 267 and 279 each coordinate Mg(2+). N(1)-(5-phospho-beta-D-ribosyl)glycinamide is bound by residues aspartate 286, lysine 355, and 362–363; that span reads RR.

This sequence belongs to the PurK/PurT family. Homodimer.

It catalyses the reaction N(1)-(5-phospho-beta-D-ribosyl)glycinamide + formate + ATP = N(2)-formyl-N(1)-(5-phospho-beta-D-ribosyl)glycinamide + ADP + phosphate + H(+). It participates in purine metabolism; IMP biosynthesis via de novo pathway; N(2)-formyl-N(1)-(5-phospho-D-ribosyl)glycinamide from N(1)-(5-phospho-D-ribosyl)glycinamide (formate route): step 1/1. Its function is as follows. Involved in the de novo purine biosynthesis. Catalyzes the transfer of formate to 5-phospho-ribosyl-glycinamide (GAR), producing 5-phospho-ribosyl-N-formylglycinamide (FGAR). Formate is provided by PurU via hydrolysis of 10-formyl-tetrahydrofolate. This is Formate-dependent phosphoribosylglycinamide formyltransferase from Proteus mirabilis (strain HI4320).